A 201-amino-acid chain; its full sequence is Small ribosomal subunit protein uS4c (201 aa).

Residues 1–14 are compositionally biased toward basic residues; that stretch reads MSRYRGPRFKKIRR. The tract at residues 1–44 is disordered; the sequence is MSRYRGPRFKKIRRLGALPGLTSKRPRAGSDPRNQSRSGKKSQY. The 64-residue stretch at 89-152 folds into the S4 RNA-binding domain; it reads MRLDNTLFRL…NSRTLVQNLL (64 aa).

The protein belongs to the universal ribosomal protein uS4 family. Part of the 30S ribosomal subunit. Contacts protein S5. The interaction surface between S4 and S5 is involved in control of translational fidelity.

The protein localises to the plastid. It is found in the chloroplast. In terms of biological role, one of the primary rRNA binding proteins, it binds directly to 16S rRNA where it nucleates assembly of the body of the 30S subunit. With S5 and S12 plays an important role in translational accuracy. This chain is Small ribosomal subunit protein uS4c (rps4), found in Draba nemorosa (Woodland whitlowgrass).